The primary structure comprises 750 residues: Photosystem I P700 chlorophyll a apoprotein A1 (750 aa).

Transmembrane regions (helical) follow at residues 70 to 93, 156 to 179, 195 to 219, 291 to 309, 346 to 369, 385 to 411, 433 to 455, and 531 to 549; these read VFSAHFGQLAIIFIWLSGMYFHGA, LYSTAIGGLIFAALMLFAGWFHYH, LNHHLAGLLGLGSLAWAGHQVHVSL, TAHHHLAIAVVFLVAGHMY, WHAQLALNLAMLGSLTIIVAHHMY, LSLFTHHMWIGGFTIVGAAAHAAIFMV, AIISHLNWACIFLGFHSFGLYIH, and FLVHHIHAFTIHVTVLILL. [4Fe-4S] cluster is bound by residues cysteine 573 and cysteine 582. 2 helical membrane passes run 589–610 and 664–686; these read HVFLGLFWMYNAISVVIFHFSW and LSAYGLLFLGAHFVWAFSLMFLF. Chlorophyll a' is bound at residue histidine 675. Residues methionine 683 and tyrosine 691 each coordinate chlorophyll a. Tryptophan 692 is a binding site for phylloquinone. Residues 724 to 744 form a helical membrane-spanning segment; that stretch reads AVGVAHYLLGGIATTWAFFLA.

This sequence belongs to the PsaA/PsaB family. The PsaA/B heterodimer binds the P700 chlorophyll special pair and subsequent electron acceptors. PSI consists of a core antenna complex that captures photons, and an electron transfer chain that converts photonic excitation into a charge separation. The eukaryotic PSI reaction center is composed of at least 11 subunits. P700 is a chlorophyll a/chlorophyll a' dimer, A0 is one or more chlorophyll a, A1 is one or both phylloquinones and FX is a shared 4Fe-4S iron-sulfur center. serves as cofactor.

The protein localises to the plastid. Its subcellular location is the chloroplast thylakoid membrane. It catalyses the reaction reduced [plastocyanin] + hnu + oxidized [2Fe-2S]-[ferredoxin] = oxidized [plastocyanin] + reduced [2Fe-2S]-[ferredoxin]. Functionally, psaA and PsaB bind P700, the primary electron donor of photosystem I (PSI), as well as the electron acceptors A0, A1 and FX. PSI is a plastocyanin-ferredoxin oxidoreductase, converting photonic excitation into a charge separation, which transfers an electron from the donor P700 chlorophyll pair to the spectroscopically characterized acceptors A0, A1, FX, FA and FB in turn. Oxidized P700 is reduced on the lumenal side of the thylakoid membrane by plastocyanin. In Anthoceros angustus (Hornwort), this protein is Photosystem I P700 chlorophyll a apoprotein A1.